A 440-amino-acid polypeptide reads, in one-letter code: MTNITQNQKITVVGAGLAGSECALQLADMGYSVVLYEMRDKTMTPAHKTHKFAELVCSNSFGSLGEHSAPGQLKWEAKKLNSHILQAAFEAQVPAGQALGMDREVFSAIMTEKVKNHPNIEIRNDVVKSLNDIPRPAVIATGPLTHDDLAESMRQHFGDEFLYFFDAIAPIIDADSINTEIAWKADRYDKGTGDYYNCPMNKEEYNRFIEEIQKARKIEPKDFETTDFFEGCMPIEVMVDRGPQTLRFGPMKPIGLDDPRTGRYPWAVVQLRQDNKEGTAYNMVGFQTRMAYGEQVRVFRMIPGLENAEFLKLGSIHRNLFINSPKRLNKDLSSKNDPWLFFAGQITGVEGYFESTCTGLMVSRFLNQKLKDQPFNPPPRESAFGSLLEAITDPTRAEHFQPTNINFALLPPLAEKERDKTLRKEKQIAIARNVMEQWNP.

14–19 contributes to the FAD binding site; sequence GAGLAG.

Belongs to the MnmG family. TrmFO subfamily. FAD serves as cofactor.

It localises to the cytoplasm. The catalysed reaction is uridine(54) in tRNA + (6R)-5,10-methylene-5,6,7,8-tetrahydrofolate + NADH + H(+) = 5-methyluridine(54) in tRNA + (6S)-5,6,7,8-tetrahydrofolate + NAD(+). It catalyses the reaction uridine(54) in tRNA + (6R)-5,10-methylene-5,6,7,8-tetrahydrofolate + NADPH + H(+) = 5-methyluridine(54) in tRNA + (6S)-5,6,7,8-tetrahydrofolate + NADP(+). In terms of biological role, catalyzes the folate-dependent formation of 5-methyl-uridine at position 54 (M-5-U54) in all tRNAs. This chain is Methylenetetrahydrofolate--tRNA-(uracil-5-)-methyltransferase TrmFO, found in Bdellovibrio bacteriovorus (strain ATCC 15356 / DSM 50701 / NCIMB 9529 / HD100).